The sequence spans 346 residues: Golgi to ER traffic protein 4 (346 aa).

Positions 317 to 346 (GQNQGGSRRTPQGRSQSKTVEAPPASMELD) are disordered. The segment covering 321 to 335 (GGSRRTPQGRSQSKT) has biased composition (polar residues).

It belongs to the GET4 family. As to quaternary structure, component of the get4/get5/sgt2 sorting complex.

The protein localises to the cytoplasm. In terms of biological role, component of the get4/get5/sgt2 sorting complex involved in the GET (guided entry of TA proteins) pathway that leads to the insertion of tail-anchored (TA) proteins into the endoplasmic reticulum. Get4 and get5 form an obligate complex that catalyzes the transfer of tail-anchored proteins destined to the endoplasmic reticulum from sgt2 to the cytosolic targeting factor which then targets the TA protein to the ER membrane via get1/get2. The polypeptide is Golgi to ER traffic protein 4 (Aspergillus fumigatus (strain ATCC MYA-4609 / CBS 101355 / FGSC A1100 / Af293) (Neosartorya fumigata)).